The chain runs to 422 residues: Ribonuclease Y (422 aa).

The 61-residue stretch at 112–172 (TTNIVKLPSD…IRREIATRTL (61 aa)) folds into the KH domain. One can recognise an HD domain in the interval 238-331 (VLAHSIEVAK…VAIADSISAS (94 aa)).

Belongs to the RNase Y family.

Its function is as follows. Endoribonuclease that initiates mRNA decay. This chain is Ribonuclease Y, found in Mycoplasma mycoides.